The following is a 628-amino-acid chain: Somatic embryogenesis receptor kinase 2 (628 aa).

Positions Met1–Ser29 are cleaved as a signal peptide. Residues Asn30–Gly241 lie on the Extracellular side of the membrane. A PSKR1 binding region spans residues Asp45 to Ser85. Residues Thr56–Val58 form a CLE44 binding region. Cys61 and Cys68 are disulfide-bonded. Leucine-rich repeat receptor-like protein kinase binding stretches follow at residues Thr62–Asn81 and Tyr100–Ser105. Phe64–His65 is a binding site for brassinolide. LRR repeat units lie at residues Leu95–Leu119, Asn121–Leu143, Phe144–Ile167, and Met168–Leu192. N-linked (GlcNAc...) asparagine glycans are attached at residues Asn107 and Asn118. 2 leucine-rich repeat receptor-like protein kinase binding regions span residues Asp126–Leu129 and Phe148–Arg150. 2 N-linked (GlcNAc...) asparagine glycosylation sites follow: Asn153 and Asn187. A leucine-rich repeat receptor-like protein kinase binding region spans residues Asp174 to Ser197. A disulfide bridge connects residues Cys205 and Cys213. Residues Ala242–Phe262 form a helical membrane-spanning segment. The Cytoplasmic portion of the chain corresponds to Ala263–Arg628. A Phosphothreonine modification is found at Thr302. The Protein kinase domain occupies Phe305–Gln592. Position 311–319 (Leu311–Val319) interacts with ATP. Phosphothreonine is present on Thr328. Lys333 lines the ATP pocket. Residues Ser386 and Ser389 each carry the phosphoserine modification. Asp432 acts as the Proton acceptor in catalysis. Thr462, Thr465, Thr466, and Thr471 each carry phosphothreonine. Position 479 is a phosphotyrosine (Tyr479). Position 481 is a phosphoserine (Ser481). Thr482 carries the phosphothreonine modification. The residue at position 486 (Ser486) is a Phosphoserine. Position 562 is a phosphothreonine (Thr562). Ser604 carries the phosphoserine modification. Thr616 is modified (phosphothreonine). The residue at position 625 (Ser625) is a Phosphoserine.

Belongs to the protein kinase superfamily. Ser/Thr protein kinase family. In terms of assembly, homo- and heterodimer. Component of the SERK1 signaling complex, composed of KAPP, CDC48A, GRF6 or GRF7, SERK1, SERK2, SERK3/BAK1 and BRI1. Bind to BRI1 in a brassinolide-dependent manner. Heterodimer with PSKR1. Interacts with the EF-Tu receptor EFR and FLS2 in a specific ligand-induced manner. Interacts with ERECTA in a EPF2-induced manner. Interacts with ERL1 in a EPF1-induced manner. Interacts with TMM. In the presence of the signal peptide RGF1, interacts with RGI3/RGFR1 and RGI4/RGFR2/SKM2. Binds to the peptide CLE44 in the presence of TDR. In terms of processing, autophosphorylated. As to expression, expressed in flowers, tapetum, developing microspores, all cells of the embryo sac, provascular strands and developing vascular bundles. Low expression in adult vascular tissue.

It is found in the cell membrane. It carries out the reaction L-seryl-[protein] + ATP = O-phospho-L-seryl-[protein] + ADP + H(+). The enzyme catalyses L-threonyl-[protein] + ATP = O-phospho-L-threonyl-[protein] + ADP + H(+). Its function is as follows. Serine/threonine-kinase involved in brassinosteroid-dependent and -independent signaling pathways. Acts redundantly with SERK1 as a control point for sporophytic development controlling male gametophyte production. Serves as coreceptor to small peptide (e.g. RGF1 and CLE44) signaling. Involved in the perception of phytosulfokine and subsequent signal transduction. The sequence is that of Somatic embryogenesis receptor kinase 2 from Arabidopsis thaliana (Mouse-ear cress).